A 749-amino-acid polypeptide reads, in one-letter code: Formate acetyltransferase (749 aa).

The PFL domain maps to 3–619 (ETNKNHATAW…KTGNTPDGRK (617 aa)). The active-site S-acetylcysteine intermediate is the Cys-413. The active-site Cysteine radical intermediate is the Cys-414. The Glycine radical domain maps to 626–749 (PGANPMHGRD…VISRTFHESM (124 aa)). Gly-724 carries the post-translational modification Glycine radical.

Belongs to the glycyl radical enzyme (GRE) family. PFL subfamily. As to quaternary structure, homodimer.

It localises to the cytoplasm. The enzyme catalyses formate + acetyl-CoA = pyruvate + CoA. The protein operates within fermentation; pyruvate fermentation; formate from pyruvate: step 1/1. Its function is as follows. Catalyzes the conversion of pyruvate to formate and acetyl-CoA. This chain is Formate acetyltransferase (pflB), found in Staphylococcus aureus (strain USA300).